The chain runs to 409 residues: Elongation factor Tu (409 aa).

The tr-type G domain occupies 10-214 (KPHVNIGTIG…EVDAYIPTPE (205 aa)). The segment at 19 to 26 (GHVDHGKT) is G1. 19–26 (GHVDHGKT) is a binding site for GTP. Thr26 serves as a coordination point for Mg(2+). Positions 60–64 (GITIN) are G2. The tract at residues 81-84 (DCPG) is G3. GTP-binding positions include 81-85 (DCPGH) and 136-139 (NKQD). Residues 136–139 (NKQD) are G4. Residues 174–176 (SAL) form a G5 region.

It belongs to the TRAFAC class translation factor GTPase superfamily. Classic translation factor GTPase family. EF-Tu/EF-1A subfamily. In terms of assembly, monomer.

It localises to the cytoplasm. It carries out the reaction GTP + H2O = GDP + phosphate + H(+). In terms of biological role, GTP hydrolase that promotes the GTP-dependent binding of aminoacyl-tRNA to the A-site of ribosomes during protein biosynthesis. The chain is Elongation factor Tu from Acaryochloris marina (strain MBIC 11017).